A 496-amino-acid polypeptide reads, in one-letter code: Lysine--tRNA ligase (496 aa).

Mg(2+)-binding residues include Glu403 and Glu410.

The protein belongs to the class-II aminoacyl-tRNA synthetase family. In terms of assembly, homodimer. The cofactor is Mg(2+).

It is found in the cytoplasm. It catalyses the reaction tRNA(Lys) + L-lysine + ATP = L-lysyl-tRNA(Lys) + AMP + diphosphate. The chain is Lysine--tRNA ligase from Aster yellows witches'-broom phytoplasma (strain AYWB).